Here is a 781-residue protein sequence, read N- to C-terminus: Transcription factor Sp3 (781 aa).

Residues 1–12 (MTAPEKPVKQEE) are compositionally biased toward basic and acidic residues. Disordered regions lie at residues 1 to 53 (MTAP…AAQD) and 65 to 88 (TCSK…AGAP). Residues 20 to 31 (SGGGGGGGGGHG) show a composition bias toward gly residues. Low complexity predominate over residues 32–53 (EYLQQQQQHGNGAVAAAAAAQD). Serine 73 carries the phosphoserine modification. A Glycyl lysine isopeptide (Lys-Gly) (interchain with G-Cter in SUMO) cross-link involves residue lysine 120. A transactivation domain (Gln-rich) region spans residues 138 to 237 (QYVLPLQNLQ…IPQTGQVQVQ (100 aa)). A disordered region spans residues 301–338 (QAMDSSDNSERTGERVSPDINETNTDTDLFVPTSSSSQ). Basic and acidic residues predominate over residues 308-317 (NSERTGERVS). The span at 320 to 338 (INETNTDTDLFVPTSSSSQ) shows a compositional bias: polar residues. Residues 350-499 (QQNTNSLTTS…TPVQTLTLGQ (150 aa)) form a transactivation domain (Gln-rich) region. Residues 461–469 (VTWQTFQVQ) carry the 9aaTAD motif. A repressor domain region spans residues 534-620 (IQLHPGENAD…RGTNLGKKKQ (87 aa)). The residue at position 551 (lysine 551) is an N6-acetyllysine; alternate. Residue lysine 551 forms a Glycyl lysine isopeptide (Lys-Gly) (interchain with G-Cter in SUMO); alternate linkage. Lysine 551 participates in a covalent cross-link: Glycyl lysine isopeptide (Lys-Gly) (interchain with G-Cter in SUMO1); alternate. A Glycyl lysine isopeptide (Lys-Gly) (interchain with G-Cter in SUMO2); alternate cross-link involves residue lysine 551. 2 positions are modified to phosphoserine: serine 563 and serine 566. A Glycyl lysine isopeptide (Lys-Gly) (interchain with G-Cter in SUMO2) cross-link involves residue lysine 593. The segment at 621-645 (HICHIPGCGKVYGKTSHLRAHLRWH) adopts a C2H2-type 1 zinc-finger fold. Serine 646 carries the phosphoserine modification. 2 consecutive C2H2-type zinc fingers follow at residues 651–675 (FVCN…RRTH) and 681–703 (FVCP…IKTH).

Belongs to the Sp1 C2H2-type zinc-finger protein family. In terms of assembly, interacts with HLTF; the interaction may be required for basal transcriptional activity of HLTF. Interacts with HDAC1; the interaction deacetylates SP3 and regulates its transcriptional activity. Interacts with HDAC2 (preferably the CK2-phosphorylated form); the interaction deacetylates SP3 and regulates its transcriptional activity. Interacts with MEIS2 isoform 4 and PBX1 isoform PBX1a. Not glycosylated. In terms of processing, acetylated by histone acetyltransferase p300, deacetylated by HDACs. Acetylation/deacetylation states regulate transcriptional activity. Acetylation appears to activate transcription. Alternate sumoylation and acetylation at Lys-551 also control transcriptional activity. Ceramides can also regulate acetylation/deacetylation events through altering the interaction of HDAC with SP3. In vitro, C(18)-ceramides, but not C(16)-ceramides, increase the interaction of HDAC1 with SP3 and enhance the deacetylation of SP3 and the subsequent repression of the TERT promoter. Post-translationally, sumoylated on all isoforms. Sumoylated on 2 sites in longer isoforms with Lys-551 being the major site. Sumoylation at this site promotes nuclear localization to the nuclear periphery, nuclear dots and PML nuclear bodies. Sumoylation on Lys-551 represses the transactivation activity, except for the largest isoform, L-Sp3, which has little effect on transactivation. Alternate sumoylation and acetylation at Lys-551 also control transcriptional activity. In terms of tissue distribution, ubiquitously expressed.

It is found in the nucleus. The protein localises to the PML body. Functionally, transcriptional factor that can act as an activator or repressor depending on isoform and/or post-translational modifications. Binds to GT and GC boxes promoter elements. Competes with SP1 for the GC-box promoters. Weak activator of transcription but can activate a number of genes involved in different processes such as cell-cycle regulation, hormone-induction and house-keeping. The protein is Transcription factor Sp3 (SP3) of Homo sapiens (Human).